The following is a 284-amino-acid chain: Bifunctional protein FolD (284 aa).

Residues 164 to 166 (GRS) and Ser-189 each bind NADP(+).

Belongs to the tetrahydrofolate dehydrogenase/cyclohydrolase family. Homodimer.

The enzyme catalyses (6R)-5,10-methylene-5,6,7,8-tetrahydrofolate + NADP(+) = (6R)-5,10-methenyltetrahydrofolate + NADPH. It catalyses the reaction (6R)-5,10-methenyltetrahydrofolate + H2O = (6R)-10-formyltetrahydrofolate + H(+). Its pathway is one-carbon metabolism; tetrahydrofolate interconversion. Its function is as follows. Catalyzes the oxidation of 5,10-methylenetetrahydrofolate to 5,10-methenyltetrahydrofolate and then the hydrolysis of 5,10-methenyltetrahydrofolate to 10-formyltetrahydrofolate. The sequence is that of Bifunctional protein FolD from Listeria monocytogenes serotype 4a (strain HCC23).